A 341-amino-acid polypeptide reads, in one-letter code: S-adenosylmethionine:tRNA ribosyltransferase-isomerase (341 aa).

This sequence belongs to the QueA family. Monomer.

It localises to the cytoplasm. It catalyses the reaction 7-aminomethyl-7-carbaguanosine(34) in tRNA + S-adenosyl-L-methionine = epoxyqueuosine(34) in tRNA + adenine + L-methionine + 2 H(+). Its pathway is tRNA modification; tRNA-queuosine biosynthesis. Transfers and isomerizes the ribose moiety from AdoMet to the 7-aminomethyl group of 7-deazaguanine (preQ1-tRNA) to give epoxyqueuosine (oQ-tRNA). In Clostridium perfringens (strain SM101 / Type A), this protein is S-adenosylmethionine:tRNA ribosyltransferase-isomerase.